A 145-amino-acid chain; its full sequence is Large ribosomal subunit protein uL11m (145 aa).

It belongs to the universal ribosomal protein uL11 family.

The protein localises to the mitochondrion. The polypeptide is Large ribosomal subunit protein uL11m (RPL11) (Reclinomonas americana).